The following is a 461-amino-acid chain: Photosystem II CP43 reaction center protein (461 aa).

A propeptide spanning residues 1 to 2 (ME) is cleaved from the precursor. An N-acetylthreonine modification is found at T3. At T3 the chain carries Phosphothreonine. The next 5 membrane-spanning stretches (helical) occupy residues 57–81 (LFEVAHFIPEKPMYEQGLILLPHLA), 122–143 (IIGPEVLEESFPFFGYDWKDKN), 166–188 (KAMFFGGVYDTWAPGGGDVRVIS), 243–263 (KPFSWARRALVWSGEAYLSYS), and 279–300 (WFNNTAYPSEFFGPTGPEASQA). E355 serves as a coordination point for [CaMn4O5] cluster. Residues 435-459 (RARAASGGFEKGLDRENEPVLSMKL) traverse the membrane as a helical segment.

It belongs to the PsbB/PsbC family. PsbC subfamily. In terms of assembly, PSII is composed of 1 copy each of membrane proteins PsbA, PsbB, PsbC, PsbD, PsbE, PsbF, PsbH, PsbI, PsbJ, PsbK, PsbL, PsbM, PsbT, PsbX, PsbY, PsbZ, Psb30/Ycf12, at least 3 peripheral proteins of the oxygen-evolving complex and a large number of cofactors. It forms dimeric complexes. It depends on Binds multiple chlorophylls and provides some of the ligands for the Ca-4Mn-5O cluster of the oxygen-evolving complex. It may also provide a ligand for a Cl- that is required for oxygen evolution. PSII binds additional chlorophylls, carotenoids and specific lipids. as a cofactor.

The protein resides in the plastid. Its subcellular location is the cyanelle thylakoid membrane. In terms of biological role, one of the components of the core complex of photosystem II (PSII). It binds chlorophyll and helps catalyze the primary light-induced photochemical processes of PSII. PSII is a light-driven water:plastoquinone oxidoreductase, using light energy to abstract electrons from H(2)O, generating O(2) and a proton gradient subsequently used for ATP formation. This is Photosystem II CP43 reaction center protein from Cyanophora paradoxa.